A 447-amino-acid polypeptide reads, in one-letter code: Sensor protein VanSB (447 aa).

2 consecutive transmembrane segments (helical) span residues 10–30 and 137–155; these read VFSYTIIVLLLLVGVTATLFA and GIVMIAIMVVFSLLCAYIF. One can recognise an HAMP domain in the interval 157 to 208; that stretch reads RQMTTPIKALADSANKMANLKEVPPPLERKDELGALAHDMHSMYIRLKETIA. Residues 230-445 enclose the Histidine kinase domain; sequence AASHELKTPI…LFWLDLPPTS (216 aa). His233 is modified (phosphohistidine; by autocatalysis).

It is found in the cell membrane. It carries out the reaction ATP + protein L-histidine = ADP + protein N-phospho-L-histidine.. Functionally, member of the two-component regulatory system VanSB/VanRB. Activates the transcription of vanSB, vanYB and vanW in response to vancomycin which results in vancomycin resistance. VanSB may activate VanRB by phosphorylation. May also act as a phospho-VanRB phosphatase. This Enterococcus faecalis (strain ATCC 700802 / V583) protein is Sensor protein VanSB (vanSB).